Reading from the N-terminus, the 521-residue chain is Cytochrome P450 monooxygenase ARMGADRAFT_1018420 (521 aa).

Residues Val9–Val26 traverse the membrane as a helical segment. Cys443 serves as a coordination point for heme. A glycan (N-linked (GlcNAc...) asparagine) is linked at Asn450.

Belongs to the cytochrome P450 family. Heme serves as cofactor.

It localises to the membrane. The protein operates within secondary metabolite biosynthesis. Its function is as follows. Cytochrome P450 monooxygenase, part of the gene cluster that mediates the biosynthesis of melleolides, a range of antifungal and phytotoxic polyketide derivatives composed of an orsellinic acid (OA) moiety esterified to various sesquiterpene alcohols. The first step in melleolides biosynthesis is performed by the delta(6)-protoilludene synthase PRO1 which catalyzes the cyclization of farnesyl diphosphate to protoilludene. The orsellinic acid synthase armB produces OA by condensing acetyl-CoA with 3 malonyl-CoA units in a three-round chain elongation reaction folowed by a C2-C7 ring closure. ArmB further catalyzes the trans-esterification of OA to the various sesquiterpene alcohols resulting from the hydroxylation of protoilludene. The melleolides cluster also includes 5 cytochrome P450 monooxygenases, 4 NAD(+)-dependent oxidoreductases, one flavin-dependent oxidoreductase, and one O-methyltransferase. The cytochrome P450 monooxygenases may be involved in protoilludene hydroxylation to elaborate melleolides with multiple alcohol groups, such as melleolide D, which carries alcohol functionalities at C-4, C-5, C-10, and C-13. The role of the NAD(+)-dependent enzymes remains unknown. Numerous melleolides, including arnamial, show 5'-O-methylation of the aromatic moiety which may be catalyzed by the methyltransferase encoded in the cluster. The flavin-dependent oxidoreductase might represent the dehydrogenase yielding the aldehyde in position 1 of arnamial and other melleolides. Finally, several halogenase localized outside of the cluster, are able to catalyze the transfer of a single chlorine atom to the melleolide backbone, resulting in a 6'-chloromelleolide product. This chain is Cytochrome P450 monooxygenase ARMGADRAFT_1018420, found in Armillaria gallica (Bulbous honey fungus).